A 302-amino-acid polypeptide reads, in one-letter code: HPr kinase/phosphorylase (302 aa).

Active-site residues include H136 and K157. Residue 151-158 (GESGIGKS) participates in ATP binding. S158 contributes to the Mg(2+) binding site. The Proton acceptor; for phosphorylation activity. Proton donor; for dephosphorylation activity role is filled by D175. Positions 198–207 (LEVRGLGIID) are important for the catalytic mechanism of both phosphorylation and dephosphorylation. A Mg(2+)-binding site is contributed by E199. The active site involves R240. An important for the catalytic mechanism of dephosphorylation region spans residues 261-266 (PIRPGR).

The protein belongs to the HPrK/P family. As to quaternary structure, homohexamer. Mg(2+) serves as cofactor.

The catalysed reaction is [HPr protein]-L-serine + ATP = [HPr protein]-O-phospho-L-serine + ADP + H(+). It carries out the reaction [HPr protein]-O-phospho-L-serine + phosphate + H(+) = [HPr protein]-L-serine + diphosphate. Its function is as follows. Catalyzes the ATP- as well as the pyrophosphate-dependent phosphorylation of a specific serine residue in HPr, a phosphocarrier protein of the phosphoenolpyruvate-dependent sugar phosphotransferase system (PTS). HprK/P also catalyzes the pyrophosphate-producing, inorganic phosphate-dependent dephosphorylation (phosphorolysis) of seryl-phosphorylated HPr (P-Ser-HPr). The two antagonistic activities of HprK/P are regulated by several intracellular metabolites, which change their concentration in response to the absence or presence of rapidly metabolisable carbon sources (glucose, fructose, etc.) in the growth medium. Therefore, by controlling the phosphorylation state of HPr, HPrK/P is a sensor enzyme that plays a major role in the regulation of carbon metabolism and sugar transport: it mediates carbon catabolite repression (CCR), and regulates PTS-catalyzed carbohydrate uptake and inducer exclusion. The protein is HPr kinase/phosphorylase of Clostridium beijerinckii (strain ATCC 51743 / NCIMB 8052) (Clostridium acetobutylicum).